The chain runs to 368 residues: MSAQSVEEDSILIIPNPDEEEKILRVKLEEDPDGEEGSSISWNHLPDPEIFRQRFRQFGYQDSPGPREAVSQLRELCRLWLRPETHTKEQILELVVLEQFVAILPRELQTLVREHHPENGEEAVTVLEDLESELDDPGQPVSLRRRKREVLVEEIASQEDAQGLPSSELDAVENQLKWASWELHSLRHCDDDATAENGALAPKQEIASAGESHEVPGTLNIGVPQIFKYGETCFPKGRFERKRNPSRKKQHICDECGKHFSQGSALILHQRIHSGEKPYGCVECGKAFSRSSILVQHQRVHTGEKPYKCLECGKAFSQNSGLINHQRIHTGEKPYECVQCGKSYSQSSNLFRHQRRHNAEKLLNVVKV.

Lys22 is covalently cross-linked (Glycyl lysine isopeptide (Lys-Gly) (interchain with G-Cter in SUMO2)). Lys27 participates in a covalent cross-link: Glycyl lysine isopeptide (Lys-Gly) (interchain with G-Cter in SUMO1); alternate. Lys27 participates in a covalent cross-link: Glycyl lysine isopeptide (Lys-Gly) (interchain with G-Cter in SUMO2); alternate. The region spanning Arg52–Leu134 is the SCAN box domain. Residues Ser132 and Ser142 each carry the phosphoserine modification. Glycyl lysine isopeptide (Lys-Gly) (interchain with G-Cter in SUMO2) cross-links involve residues Lys147, Lys177, and Lys236. The segment at His251 to His273 adopts a C2H2-type 1 zinc-finger fold. The interval His251–His301 is necessary and sufficient for nuclear localization. Phosphoserine is present on Ser274. Glycyl lysine isopeptide (Lys-Gly) (interchain with G-Cter in SUMO2) cross-links involve residues Lys277 and Lys286. 3 C2H2-type zinc fingers span residues Tyr279 to His301, Tyr307 to His329, and Tyr335 to His357. Residue Ser292 is modified to Phosphoserine. Tyr335 carries the phosphotyrosine modification. Glycyl lysine isopeptide (Lys-Gly) (interchain with G-Cter in SUMO2) cross-links involve residues Lys361 and Lys367.

The protein belongs to the krueppel C2H2-type zinc-finger protein family. In terms of processing, sumoylated.

The protein resides in the nucleus. Functionally, transcription factor required for myelination of differentiated oligodendrocytes. Required for the conversion of oligodendrocytes from the premyelinating to the myelinating state. In the developing central nervous system (CNS), involved in the maintenance in the progenitor stage by promoting the cell cycle. Specifically binds to the 5'-TCAT-3' DNA sequence. Has transcription repressor activity in vitro. The sequence is that of Zinc finger protein 24 (Znf24) from Rattus norvegicus (Rat).